Reading from the N-terminus, the 466-residue chain is Light-independent protochlorophyllide reductase subunit N (466 aa).

The [4Fe-4S] cluster site is built by Cys24, Cys49, and Cys109.

The protein belongs to the BchN/ChlN family. Protochlorophyllide reductase is composed of three subunits; ChlL, ChlN and ChlB. Forms a heterotetramer of two ChlB and two ChlN subunits. [4Fe-4S] cluster is required as a cofactor.

The enzyme catalyses chlorophyllide a + oxidized 2[4Fe-4S]-[ferredoxin] + 2 ADP + 2 phosphate = protochlorophyllide a + reduced 2[4Fe-4S]-[ferredoxin] + 2 ATP + 2 H2O. Its pathway is porphyrin-containing compound metabolism; chlorophyll biosynthesis (light-independent). Functionally, component of the dark-operative protochlorophyllide reductase (DPOR) that uses Mg-ATP and reduced ferredoxin to reduce ring D of protochlorophyllide (Pchlide) to form chlorophyllide a (Chlide). This reaction is light-independent. The NB-protein (ChlN-ChlB) is the catalytic component of the complex. In Synechococcus sp. (strain JA-3-3Ab) (Cyanobacteria bacterium Yellowstone A-Prime), this protein is Light-independent protochlorophyllide reductase subunit N.